We begin with the raw amino-acid sequence, 161 residues long: Nucleotide-binding protein PFL_4775 (161 aa).

The protein belongs to the YajQ family.

Its function is as follows. Nucleotide-binding protein. This is Nucleotide-binding protein PFL_4775 from Pseudomonas fluorescens (strain ATCC BAA-477 / NRRL B-23932 / Pf-5).